A 201-amino-acid polypeptide reads, in one-letter code: Phosphoheptose isomerase (201 aa).

An SIS domain is found at 36-195 (IAKSLNEGGK…EDILFEIPAA (160 aa)). 51 to 53 (NGG) serves as a coordination point for substrate. Residues His-60 and Glu-64 each coordinate Zn(2+). Substrate is bound by residues Glu-64, 93 to 94 (ND), 119 to 121 (STS), Ser-124, and Gln-171. Positions 171 and 179 each coordinate Zn(2+).

Belongs to the SIS family. GmhA subfamily. The cofactor is Zn(2+).

It localises to the cytoplasm. It carries out the reaction 2 D-sedoheptulose 7-phosphate = D-glycero-alpha-D-manno-heptose 7-phosphate + D-glycero-beta-D-manno-heptose 7-phosphate. It functions in the pathway carbohydrate biosynthesis; D-glycero-D-manno-heptose 7-phosphate biosynthesis; D-glycero-alpha-D-manno-heptose 7-phosphate and D-glycero-beta-D-manno-heptose 7-phosphate from sedoheptulose 7-phosphate: step 1/1. In terms of biological role, catalyzes the isomerization of sedoheptulose 7-phosphate in D-glycero-D-manno-heptose 7-phosphate. In Thermodesulfovibrio yellowstonii (strain ATCC 51303 / DSM 11347 / YP87), this protein is Phosphoheptose isomerase.